Here is a 336-residue protein sequence, read N- to C-terminus: Vomeronasal type-1 receptor 102 (336 aa).

Residues 1–42 (MVGVQICQGMTSEILFFSLQPQFSNMMNKNSRLHIDSNIRNT) lie on the Extracellular side of the membrane. Residues 43-63 (FFTEIGIGVSANSLLLLFNIF) form a helical membrane-spanning segment. The Cytoplasmic portion of the chain corresponds to 64 to 75 (KFIHGQRSRLTD). The helical transmembrane segment at 76 to 96 (LPIGLLSLINLLMLLIMACIA) threads the bilayer. The Extracellular portion of the chain corresponds to 97–120 (TDIFISCRRWDDIICKSLLYLYRT). The cysteines at positions 111 and 198 are disulfide-linked. The helical transmembrane segment at 121-140 (FRGLSLSTTCLLSVLQAIIL) threads the bilayer. The Cytoplasmic portion of the chain corresponds to 141–157 (SPRSSCLAKYKHKPPHH). The chain crosses the membrane as a helical span at residues 158–178 (IFCAMLFLSVLYMFISSHLLL). Residues 179 to 213 (SIIATPNLTTNDFIHVSQSCSILPMSYLMQSMFST) are Extracellular-facing. The N-linked (GlcNAc...) asparagine glycan is linked to Asn185. Residues 214-234 (LLAIRNVFLISLIVLSTWYMV) form a helical membrane-spanning segment. At 235–264 (ALLCRHRKQTRHLQDTSLSRKASPEQRATR) the chain is on the cytoplasmic side. A helical membrane pass occupies residues 265-285 (SILMLRSLFVLMSIFDSIVSC). The Extracellular segment spans residues 286-296 (SRTMYLNDPTS). A helical transmembrane segment spans residues 297–317 (YSIQLLVVHIYATVSPFVFMI). At 318–336 (TEKHIVNYLKSMYVRVLNV) the chain is on the cytoplasmic side.

It belongs to the G-protein coupled receptor 1 family. As to expression, expressed in 1-4% of neurons of the vomeronasal organ. Only one pheromone receptor gene may be expressed in a particular neuron. Not expressed in the main olfactory epithelium.

The protein resides in the cell membrane. In terms of biological role, putative pheromone receptor implicated in the regulation of social as well as reproductive behavior. This Rattus norvegicus (Rat) protein is Vomeronasal type-1 receptor 102 (Vom1r102).